A 45-amino-acid polypeptide reads, in one-letter code: Natriuretic peptide OsNP-d (45 aa).

The propeptide occupies 1–5 (PAAGL). A disulfide bridge links Cys-14 with Cys-30.

It belongs to the natriuretic peptide family. As to expression, expressed by the venom gland.

The protein resides in the secreted. Snake venom natriuretic peptide that targets both NPR1 and NPR2. Exhibits hypotensive and vasodepressor activities. In Oxyuranus scutellatus scutellatus (Australian taipan), this protein is Natriuretic peptide OsNP-d.